Reading from the N-terminus, the 557-residue chain is 2-succinyl-5-enolpyruvyl-6-hydroxy-3-cyclohexene-1-carboxylate synthase (557 aa).

It belongs to the TPP enzyme family. MenD subfamily. As to quaternary structure, homodimer. Mg(2+) is required as a cofactor. Requires Mn(2+) as cofactor. Thiamine diphosphate serves as cofactor.

The enzyme catalyses isochorismate + 2-oxoglutarate + H(+) = 5-enolpyruvoyl-6-hydroxy-2-succinyl-cyclohex-3-ene-1-carboxylate + CO2. Its pathway is quinol/quinone metabolism; 1,4-dihydroxy-2-naphthoate biosynthesis; 1,4-dihydroxy-2-naphthoate from chorismate: step 2/7. It participates in quinol/quinone metabolism; menaquinone biosynthesis. In terms of biological role, catalyzes the thiamine diphosphate-dependent decarboxylation of 2-oxoglutarate and the subsequent addition of the resulting succinic semialdehyde-thiamine pyrophosphate anion to isochorismate to yield 2-succinyl-5-enolpyruvyl-6-hydroxy-3-cyclohexene-1-carboxylate (SEPHCHC). The chain is 2-succinyl-5-enolpyruvyl-6-hydroxy-3-cyclohexene-1-carboxylate synthase from Staphylococcus aureus (strain Mu3 / ATCC 700698).